Reading from the N-terminus, the 303-residue chain is Proteasome subunit beta (303 aa).

Positions 1–64 are cleaved as a propeptide — removed in mature form; by autocatalysis; sequence MTWPDRDTSA…VTPSDAVPHG (64 aa). Threonine 65 serves as the catalytic Nucleophile.

It belongs to the peptidase T1B family. In terms of assembly, the 20S proteasome core is composed of 14 alpha and 14 beta subunits that assemble into four stacked heptameric rings, resulting in a barrel-shaped structure. The two inner rings, each composed of seven catalytic beta subunits, are sandwiched by two outer rings, each composed of seven alpha subunits. The catalytic chamber with the active sites is on the inside of the barrel. Has a gated structure, the ends of the cylinder being occluded by the N-termini of the alpha-subunits. Is capped by the proteasome-associated ATPase, ARC.

Its subcellular location is the cytoplasm. It carries out the reaction Cleavage of peptide bonds with very broad specificity.. The protein operates within protein degradation; proteasomal Pup-dependent pathway. The formation of the proteasomal ATPase ARC-20S proteasome complex, likely via the docking of the C-termini of ARC into the intersubunit pockets in the alpha-rings, may trigger opening of the gate for substrate entry. Interconversion between the open-gate and close-gate conformations leads to a dynamic regulation of the 20S proteasome proteolysis activity. In terms of biological role, component of the proteasome core, a large protease complex with broad specificity involved in protein degradation. The protein is Proteasome subunit beta of Mycolicibacterium gilvum (strain PYR-GCK) (Mycobacterium gilvum (strain PYR-GCK)).